The following is a 297-amino-acid chain: Small ribosomal subunit protein uS9m (297 aa).

Residues 278-297 are disordered; the sequence is VERKKPGKRKARKMPTWVKR.

It belongs to the universal ribosomal protein uS9 family.

It is found in the mitochondrion. This is Small ribosomal subunit protein uS9m (MRPS9) from Kluyveromyces lactis (strain ATCC 8585 / CBS 2359 / DSM 70799 / NBRC 1267 / NRRL Y-1140 / WM37) (Yeast).